A 504-amino-acid polypeptide reads, in one-letter code: 26S proteasome non-ATPase regulatory subunit 3 (504 aa).

In terms of domain architecture, PCI spans A254–S433.

It belongs to the proteasome subunit S3 family. The 26S proteasome is composed of a core protease, known as the 20S proteasome, capped at one or both ends by the 19S regulatory complex (RC). The RC is composed of at least 18 different subunits in two subcomplexes, the base and the lid, which form the portions proximal and distal to the 20S proteolytic core, respectively.

In terms of biological role, acts as a regulatory subunit of the 26 proteasome which is involved in the ATP-dependent degradation of ubiquitinated proteins. The sequence is that of 26S proteasome non-ATPase regulatory subunit 3 (rpn-3) from Caenorhabditis elegans.